We begin with the raw amino-acid sequence, 148 residues long: Single-stranded DNA-binding protein, mitochondrial (148 aa).

Residues 1 to 16 constitute a mitochondrion transit peptide; that stretch reads MFRRPALQVLRQFVRH. Residues 30-141 enclose the SSB domain; it reads LNRVQLLGRV…IIADNIVFLS (112 aa). A phosphoserine mark is found at Ser67 and Ser79. At Lys113 the chain carries N6-acetyllysine. At Lys122 the chain carries N6-succinyllysine.

Homotetramer. Interacts with MPG/AAG, through inhibition of its glycosylase activity it potentially prevents formation of DNA breaks in ssDNA, ensuring that base removal primarily occurs in dsDNA. Interacts with POLDIP2. Interacts with PRIMPOL.

It localises to the mitochondrion. The protein resides in the mitochondrion matrix. Its subcellular location is the mitochondrion nucleoid. Functionally, binds preferentially and cooperatively to pyrimidine rich single-stranded DNA (ss-DNA). In vitro, required to maintain the copy number of mitochondrial DNA (mtDNA) and plays a crucial role during mtDNA replication by stimulating the activity of the replisome components POLG and TWNK at the replication fork. Promotes the activity of the gamma complex polymerase POLG, largely by organizing the template DNA and eliminating secondary structures to favor ss-DNA conformations that facilitate POLG activity. In addition it is able to promote the 5'-3' unwinding activity of the mtDNA helicase TWNK. May also function in mtDNA repair. The protein is Single-stranded DNA-binding protein, mitochondrial (SSBP1) of Oryctolagus cuniculus (Rabbit).